Reading from the N-terminus, the 75-residue chain is Small ribosomal subunit protein bS21B (75 aa).

Over residues 33-52 the composition is skewed to basic and acidic residues; sequence RRSYEKPSERRAREKAEAVR. Positions 33–75 are disordered; it reads RRSYEKPSERRAREKAEAVRRARKLARKQAQREGLLPGKKRAA.

This sequence belongs to the bacterial ribosomal protein bS21 family.

This chain is Small ribosomal subunit protein bS21B, found in Chelativorans sp. (strain BNC1).